The primary structure comprises 123 residues: Large ribosomal subunit protein eL8 (123 aa).

The protein belongs to the eukaryotic ribosomal protein eL8 family. Part of the 50S ribosomal subunit. Probably part of the RNase P complex.

Its subcellular location is the cytoplasm. In terms of biological role, multifunctional RNA-binding protein that recognizes the K-turn motif in ribosomal RNA, the RNA component of RNase P, box H/ACA, box C/D and box C'/D' sRNAs. The sequence is that of Large ribosomal subunit protein eL8 from Thermococcus kodakarensis (strain ATCC BAA-918 / JCM 12380 / KOD1) (Pyrococcus kodakaraensis (strain KOD1)).